The primary structure comprises 162 residues: UPF0460 protein y4xD (162 aa).

It belongs to the UPF0460 family.

The protein is UPF0460 protein y4xD of Sinorhizobium fredii (strain NBRC 101917 / NGR234).